A 206-amino-acid polypeptide reads, in one-letter code: Small ribosomal subunit protein uS4B (206 aa).

Residues 96-156 (GRLDNVVYRM…EKAKKQSRIG (61 aa)) enclose the S4 RNA-binding domain.

It belongs to the universal ribosomal protein uS4 family. In terms of assembly, part of the 30S ribosomal subunit. Contacts protein S5. The interaction surface between S4 and S5 is involved in control of translational fidelity.

Its function is as follows. One of the primary rRNA binding proteins, it binds directly to 16S rRNA where it nucleates assembly of the body of the 30S subunit. With S5 and S12 plays an important role in translational accuracy. The sequence is that of Small ribosomal subunit protein uS4B from Psychromonas ingrahamii (strain DSM 17664 / CCUG 51855 / 37).